The sequence spans 797 residues: Xaa-Pro dipeptidyl-peptidase (797 aa).

Active-site charge relay system residues include S370, D490, and H521.

Belongs to the peptidase S15 family. Homodimer.

The protein localises to the cytoplasm. The catalysed reaction is Hydrolyzes Xaa-Pro-|- bonds to release unblocked, N-terminal dipeptides from substrates including Ala-Pro-|-p-nitroanilide and (sequentially) Tyr-Pro-|-Phe-Pro-|-Gly-Pro-|-Ile.. Functionally, removes N-terminal dipeptides sequentially from polypeptides having unsubstituted N-termini provided that the penultimate residue is proline. This chain is Xaa-Pro dipeptidyl-peptidase, found in Lacticaseibacillus casei (strain BL23) (Lactobacillus casei).